Consider the following 339-residue polypeptide: Anthranilate phosphoribosyltransferase (339 aa).

Residues glycine 80, 83-84, threonine 88, 90-93, 108-116, and serine 120 contribute to the 5-phospho-alpha-D-ribose 1-diphosphate site; these read GD, NIST, and KHGNRSVSS. Residue glycine 80 coordinates anthranilate. Serine 92 is a binding site for Mg(2+). Residue asparagine 111 coordinates anthranilate. Residue arginine 166 coordinates anthranilate. Positions 225 and 226 each coordinate Mg(2+).

This sequence belongs to the anthranilate phosphoribosyltransferase family. In terms of assembly, homodimer. Requires Mg(2+) as cofactor.

The enzyme catalyses N-(5-phospho-beta-D-ribosyl)anthranilate + diphosphate = 5-phospho-alpha-D-ribose 1-diphosphate + anthranilate. It functions in the pathway amino-acid biosynthesis; L-tryptophan biosynthesis; L-tryptophan from chorismate: step 2/5. Its function is as follows. Catalyzes the transfer of the phosphoribosyl group of 5-phosphorylribose-1-pyrophosphate (PRPP) to anthranilate to yield N-(5'-phosphoribosyl)-anthranilate (PRA). This chain is Anthranilate phosphoribosyltransferase, found in Desulfosudis oleivorans (strain DSM 6200 / JCM 39069 / Hxd3) (Desulfococcus oleovorans).